A 398-amino-acid chain; its full sequence is Protein-glutamate methylesterase/protein-glutamine glutaminase (398 aa).

One can recognise a Response regulatory domain in the interval 4-121 (KVLVVDDSSF…ATNKDDAILL (118 aa)). Asp55 is subject to 4-aspartylphosphate. The disordered stretch occupies residues 133-200 (RMYRSSSLTP…SANPTTSSIS (68 aa)). 2 stretches are compositionally biased toward polar residues: residues 136–146 (RSSSLTPTSTI) and 168–200 (RLAS…SSIS). The 194-residue stretch at 205–398 (SGKQYKLLLI…EAILKESSRG (194 aa)) folds into the CheB-type methylesterase domain. Catalysis depends on residues Ser217, His244, and Asp340.

Belongs to the CheB family. Phosphorylated by CheA. Phosphorylation of the N-terminal regulatory domain activates the methylesterase activity.

The protein localises to the cytoplasm. It catalyses the reaction [protein]-L-glutamate 5-O-methyl ester + H2O = L-glutamyl-[protein] + methanol + H(+). The catalysed reaction is L-glutaminyl-[protein] + H2O = L-glutamyl-[protein] + NH4(+). Involved in chemotaxis. Part of a chemotaxis signal transduction system that modulates chemotaxis in response to various stimuli. Catalyzes the demethylation of specific methylglutamate residues introduced into the chemoreceptors (methyl-accepting chemotaxis proteins or MCP) by CheR. Also mediates the irreversible deamidation of specific glutamine residues to glutamic acid. The sequence is that of Protein-glutamate methylesterase/protein-glutamine glutaminase from Shewanella frigidimarina (strain NCIMB 400).